A 272-amino-acid chain; its full sequence is Undecaprenyl-diphosphatase (272 aa).

Helical transmembrane passes span 42–62 (FGLSFDVALHLGTLVAVVVFF), 92–112 (YLVLAATVPAALIGYLWEDFF), 120–140 (WVVVFNLAFVGLLFLVAEAVG), 149–169 (MGFAEAVGIGLAQAAALVPGV), 194–214 (FLMSAPIIAGAGTLQLGEVLA), 224–244 (MFAVGFLCSAVVGYLAIRFFI), and 252–272 (LRAFAYYRFALAALVAALLLL).

The protein belongs to the UppP family.

The protein resides in the cell membrane. The catalysed reaction is di-trans,octa-cis-undecaprenyl diphosphate + H2O = di-trans,octa-cis-undecaprenyl phosphate + phosphate + H(+). Functionally, catalyzes the dephosphorylation of undecaprenyl diphosphate (UPP). Confers resistance to bacitracin. The chain is Undecaprenyl-diphosphatase from Rubrobacter xylanophilus (strain DSM 9941 / JCM 11954 / NBRC 16129 / PRD-1).